A 433-amino-acid polypeptide reads, in one-letter code: MTDFSPREIVSELDRFIVGQADAKRAVAIALRNRWRRLQLEGSLREEVLPKNILMIGPTGVGKTEIARRLAKLAGAPFLKVEATKFTEVGYVGRDVEQIIRDLVEVAIAQVREKKRKDVQARAQVAAEERVLDALVGPGSGPATRDSFRKKLRAGELNDKEIEIETQAGSGSPMFEIPGMPGAQIGAVSLGDIFGKMGGRTKKRRLTVADSHEILVNEEADKLLDTDQLVQEAIAAVENNGIVFLDEIDKICVRDGRSGGEVSREGVQRDLLPLIEGTTVSTKHGAVKTEHILFIASGAFHIAKPSDLLPELQGRLPIRVELNALSRDDMRRILTEPEASLIKQYVALMKTEGVTLDFSDDAIDALADVAVAVNSTVENIGARRLQTVMERVLDEISFVAPDRHGETFRVDADYVKTNVGDLAKNTDLSRFIL.

ATP is bound by residues Val18, 60–65 (GVGKTE), Asp246, Glu311, and Arg383.

The protein belongs to the ClpX chaperone family. HslU subfamily. In terms of assembly, a double ring-shaped homohexamer of HslV is capped on each side by a ring-shaped HslU homohexamer. The assembly of the HslU/HslV complex is dependent on binding of ATP.

The protein resides in the cytoplasm. In terms of biological role, ATPase subunit of a proteasome-like degradation complex; this subunit has chaperone activity. The binding of ATP and its subsequent hydrolysis by HslU are essential for unfolding of protein substrates subsequently hydrolyzed by HslV. HslU recognizes the N-terminal part of its protein substrates and unfolds these before they are guided to HslV for hydrolysis. In Rhodopseudomonas palustris (strain ATCC BAA-98 / CGA009), this protein is ATP-dependent protease ATPase subunit HslU.